Consider the following 296-residue polypeptide: Acetyl-coenzyme A carboxylase carboxyl transferase subunit beta (296 aa).

One can recognise a CoA carboxyltransferase N-terminal domain in the interval 25-294 (VWTKCTACEQ…PFVEPELISE (270 aa)). 4 residues coordinate Zn(2+): Cys29, Cys32, Cys48, and Cys51. The C4-type zinc finger occupies 29–51 (CTACEQVLYSEELKRNLYVCPKC).

The protein belongs to the AccD/PCCB family. In terms of assembly, acetyl-CoA carboxylase is a heterohexamer composed of biotin carboxyl carrier protein (AccB), biotin carboxylase (AccC) and two subunits each of ACCase subunit alpha (AccA) and ACCase subunit beta (AccD). Requires Zn(2+) as cofactor.

It localises to the cytoplasm. The enzyme catalyses N(6)-carboxybiotinyl-L-lysyl-[protein] + acetyl-CoA = N(6)-biotinyl-L-lysyl-[protein] + malonyl-CoA. It participates in lipid metabolism; malonyl-CoA biosynthesis; malonyl-CoA from acetyl-CoA: step 1/1. In terms of biological role, component of the acetyl coenzyme A carboxylase (ACC) complex. Biotin carboxylase (BC) catalyzes the carboxylation of biotin on its carrier protein (BCCP) and then the CO(2) group is transferred by the transcarboxylase to acetyl-CoA to form malonyl-CoA. The chain is Acetyl-coenzyme A carboxylase carboxyl transferase subunit beta from Haemophilus influenzae (strain 86-028NP).